We begin with the raw amino-acid sequence, 54 residues long: MLYWALIFFVVALVAGVLGFGGISSASAGIAQILFFIFLVIFVVSLIMGLVRRR.

2 helical membrane-spanning segments follow: residues 3 to 23 (YWALIFFVVALVAGVLGFGGI) and 30 to 50 (IAQILFFIFLVIFVVSLIMGL).

This sequence belongs to the UPF0391 family.

It is found in the cell membrane. This is UPF0391 membrane protein RC1_1636 from Rhodospirillum centenum (strain ATCC 51521 / SW).